The chain runs to 124 residues: Peptidyl-tRNA hydrolase (124 aa).

It belongs to the PTH2 family.

It is found in the cytoplasm. It catalyses the reaction an N-acyl-L-alpha-aminoacyl-tRNA + H2O = an N-acyl-L-amino acid + a tRNA + H(+). Its function is as follows. The natural substrate for this enzyme may be peptidyl-tRNAs which drop off the ribosome during protein synthesis. This Aeropyrum pernix (strain ATCC 700893 / DSM 11879 / JCM 9820 / NBRC 100138 / K1) protein is Peptidyl-tRNA hydrolase.